The sequence spans 577 residues: Hemagglutinin-neuraminidase (577 aa).

Position 1 is a blocked amino end (Met); by host (Met-1). Over 1 to 26 the chain is Intravirion; it reads MDRAVSQVALENDEREAKNTWRLIFR. The helical transmembrane segment at 27 to 48 threads the bilayer; sequence IAILLLTVVTLATSVASLVYSM. Over 49–577 the chain is Virion surface; sequence GASTPSDLVG…NDGVREARSG (529 aa). N-linked (GlcNAc...) asparagine; by host glycosylation occurs at Asn-119. Residues 124–152 form an important for interaction with fusion/F protein region; it reads GAPIHDPDFIGGIGKELIVDDASDVTSFY. Disulfide bonds link Cys-172–Cys-196, Cys-186–Cys-247, and Cys-238–Cys-251. An involved in neuraminidase activity region spans residues 234 to 239; sequence NRKSCS. Residues Asn-341 and Asn-433 are each glycosylated (N-linked (GlcNAc...) asparagine; by host). Cystine bridges form between Cys-344–Cys-461 and Cys-455–Cys-465. Asn-481 and Asn-538 each carry an N-linked (GlcNAc...) asparagine; by host glycan. Cys-531 and Cys-542 are joined by a disulfide.

Belongs to the paramyxoviruses hemagglutinin-neuraminidase family. Homotetramer; composed of disulfide-linked homodimers. Interacts with F protein trimer. Interacts with host CG-1B; this interaction inhibits viral adsorption and replication rather than internalization.

It is found in the virion membrane. Its subcellular location is the host cell membrane. The enzyme catalyses Hydrolysis of alpha-(2-&gt;3)-, alpha-(2-&gt;6)-, alpha-(2-&gt;8)- glycosidic linkages of terminal sialic acid residues in oligosaccharides, glycoproteins, glycolipids, colominic acid and synthetic substrates.. Functionally, mediates the viral entry into the host cell together with fusion/F protein. Attaches the virus to sialic acid-containing cell receptors and thereby initiates infection. Binding of HN protein to the receptor induces a conformational change that allows the F protein to trigger virion/cell membranes fusion. Neuraminidase activity ensures the efficient spread of the virus by dissociating the mature virions from the neuraminic acid containing glycoproteins. This Gallus gallus (Chicken) protein is Hemagglutinin-neuraminidase (HN).